We begin with the raw amino-acid sequence, 208 residues long: Thymidylate kinase (208 aa).

10–17 (GLEGAGKT) provides a ligand contact to ATP.

This sequence belongs to the thymidylate kinase family.

The catalysed reaction is dTMP + ATP = dTDP + ADP. Its function is as follows. Phosphorylation of dTMP to form dTDP in both de novo and salvage pathways of dTTP synthesis. This chain is Thymidylate kinase, found in Actinobacillus pleuropneumoniae serotype 5b (strain L20).